A 95-amino-acid chain; its full sequence is Aspartyl/glutamyl-tRNA(Asn/Gln) amidotransferase subunit C (95 aa).

This sequence belongs to the GatC family. Heterotrimer of A, B and C subunits.

The catalysed reaction is L-glutamyl-tRNA(Gln) + L-glutamine + ATP + H2O = L-glutaminyl-tRNA(Gln) + L-glutamate + ADP + phosphate + H(+). It carries out the reaction L-aspartyl-tRNA(Asn) + L-glutamine + ATP + H2O = L-asparaginyl-tRNA(Asn) + L-glutamate + ADP + phosphate + 2 H(+). In terms of biological role, allows the formation of correctly charged Asn-tRNA(Asn) or Gln-tRNA(Gln) through the transamidation of misacylated Asp-tRNA(Asn) or Glu-tRNA(Gln) in organisms which lack either or both of asparaginyl-tRNA or glutaminyl-tRNA synthetases. The reaction takes place in the presence of glutamine and ATP through an activated phospho-Asp-tRNA(Asn) or phospho-Glu-tRNA(Gln). In Alcanivorax borkumensis (strain ATCC 700651 / DSM 11573 / NCIMB 13689 / SK2), this protein is Aspartyl/glutamyl-tRNA(Asn/Gln) amidotransferase subunit C.